We begin with the raw amino-acid sequence, 427 residues long: Light-independent protochlorophyllide reductase subunit N (427 aa).

Residues cysteine 28, cysteine 53, and cysteine 114 each coordinate [4Fe-4S] cluster.

Belongs to the BchN/ChlN family. As to quaternary structure, protochlorophyllide reductase is composed of three subunits; BchL, BchN and BchB. Forms a heterotetramer of two BchB and two BchN subunits. [4Fe-4S] cluster serves as cofactor.

The catalysed reaction is chlorophyllide a + oxidized 2[4Fe-4S]-[ferredoxin] + 2 ADP + 2 phosphate = protochlorophyllide a + reduced 2[4Fe-4S]-[ferredoxin] + 2 ATP + 2 H2O. The protein operates within porphyrin-containing compound metabolism; bacteriochlorophyll biosynthesis (light-independent). Functionally, component of the dark-operative protochlorophyllide reductase (DPOR) that uses Mg-ATP and reduced ferredoxin to reduce ring D of protochlorophyllide (Pchlide) to form chlorophyllide a (Chlide). This reaction is light-independent. The NB-protein (BchN-BchB) is the catalytic component of the complex. This is Light-independent protochlorophyllide reductase subunit N from Jannaschia sp. (strain CCS1).